Reading from the N-terminus, the 430-residue chain is Dihydroorotase (430 aa).

Positions 60 and 62 each coordinate Zn(2+). Substrate contacts are provided by residues 62 to 64 (HLR) and asparagine 94. Aspartate 152, histidine 179, histidine 232, and aspartate 305 together coordinate Zn(2+). Aspartate 305 is a catalytic residue. Substrate is bound by residues histidine 309 and 323–324 (FG).

Belongs to the metallo-dependent hydrolases superfamily. DHOase family. Class I DHOase subfamily. It depends on Zn(2+) as a cofactor.

It catalyses the reaction (S)-dihydroorotate + H2O = N-carbamoyl-L-aspartate + H(+). The protein operates within pyrimidine metabolism; UMP biosynthesis via de novo pathway; (S)-dihydroorotate from bicarbonate: step 3/3. In terms of biological role, catalyzes the reversible cyclization of carbamoyl aspartate to dihydroorotate. In Solibacter usitatus (strain Ellin6076), this protein is Dihydroorotase.